The following is a 128-amino-acid chain: Large ribosomal subunit protein bL17 (128 aa).

Belongs to the bacterial ribosomal protein bL17 family. As to quaternary structure, part of the 50S ribosomal subunit. Contacts protein L32.

The polypeptide is Large ribosomal subunit protein bL17 (Haemophilus influenzae (strain 86-028NP)).